The following is a 532-amino-acid chain: [Pyruvate dehydrogenase [acetyl-transferring]]-phosphatase 2, mitochondrial (532 aa).

The transit peptide at M1 to T69 directs the protein to the mitochondrion. Residues N107–V518 enclose the PPM-type phosphatase domain. D144, G145, D415, and D511 together coordinate Mn(2+).

This sequence belongs to the PP2C family. Mg(2+) is required as a cofactor.

It is found in the mitochondrion. The catalysed reaction is O-phospho-L-seryl-[pyruvate dehydrogenase E1 alpha subunit] + H2O = L-seryl-[pyruvate dehydrogenase E1 alpha subunit] + phosphate. Mitochondrial enzyme that catalyzes the dephosphorylation and concomitant reactivation of the alpha subunit of the E1 component of the pyruvate dehydrogenase complex (PDC), thereby stimulating the conversion of pyruvate into acetyl-CoA. Acts as a crucial regulator of T cell metabolism and function, with a particular focus on T-helper Th17. This Mus musculus (Mouse) protein is [Pyruvate dehydrogenase [acetyl-transferring]]-phosphatase 2, mitochondrial (Pdp2).